The sequence spans 123 residues: Large ribosomal subunit protein bL12 (123 aa).

Belongs to the bacterial ribosomal protein bL12 family. In terms of assembly, homodimer. Part of the ribosomal stalk of the 50S ribosomal subunit. Forms a multimeric L10(L12)X complex, where L10 forms an elongated spine to which 2 to 4 L12 dimers bind in a sequential fashion. Binds GTP-bound translation factors.

Its function is as follows. Forms part of the ribosomal stalk which helps the ribosome interact with GTP-bound translation factors. Is thus essential for accurate translation. This chain is Large ribosomal subunit protein bL12, found in Shewanella sp. (strain ANA-3).